The primary structure comprises 151 residues: Large ribosomal subunit protein bL9 (151 aa).

This sequence belongs to the bacterial ribosomal protein bL9 family.

In terms of biological role, binds to the 23S rRNA. This chain is Large ribosomal subunit protein bL9, found in Carboxydothermus hydrogenoformans (strain ATCC BAA-161 / DSM 6008 / Z-2901).